The following is a 222-amino-acid chain: tRNA (guanine-N(1)-)-methyltransferase (222 aa).

S-adenosyl-L-methionine contacts are provided by residues glycine 111 and 131–136; that span reads LGNYVI.

It belongs to the RNA methyltransferase TrmD family. Homodimer.

Its subcellular location is the cytoplasm. It carries out the reaction guanosine(37) in tRNA + S-adenosyl-L-methionine = N(1)-methylguanosine(37) in tRNA + S-adenosyl-L-homocysteine + H(+). Specifically methylates guanosine-37 in various tRNAs. In Leptospira borgpetersenii serovar Hardjo-bovis (strain JB197), this protein is tRNA (guanine-N(1)-)-methyltransferase.